Here is a 154-residue protein sequence, read N- to C-terminus: Transcriptional repressor NrdR (154 aa).

A zinc finger spans residues 3 to 34 (CPTCQYNGTRVVDSRPADDGNSIRRRRECEKC). The 91-residue stretch at 49 to 139 (LIVVKKDGAR…VYRQFKDISV (91 aa)) folds into the ATP-cone domain.

The protein belongs to the NrdR family. Zn(2+) serves as cofactor.

Negatively regulates transcription of bacterial ribonucleotide reductase nrd genes and operons by binding to NrdR-boxes. This Listeria monocytogenes serotype 4a (strain HCC23) protein is Transcriptional repressor NrdR.